Consider the following 494-residue polypeptide: 4-hydroxyphenylacetate 3-monooxygenase oxygenase component (494 aa).

Substrate is bound by residues Arg-103–Tyr-107 and His-149. Residues His-149–Leu-151, Gln-155–Arg-158, and Thr-192 each bind FAD. Ser-205–Thr-206 provides a ligand contact to substrate. Residue Asp-455–Arg-458 coordinates FAD.

The protein belongs to the FADH(2)-utilizing monooxygenase family. In terms of assembly, 4-HPA 3-monooxygenase consists of a reductase component HpaI and an oxygenase component HpaH.

It catalyses the reaction 4-hydroxyphenylacetate + FADH2 + O2 = 3,4-dihydroxyphenylacetate + FAD + H2O + H(+). The protein operates within aromatic compound metabolism; 4-hydroxyphenylacetate degradation; pyruvate and succinate semialdehyde from 4-hydroxyphenylacetate: step 1/7. Its function is as follows. Utilizes FADH(2) supplied by HpaI, to catalyze the hydroxylation of 4-hydroxyphenylacetic acid, leading to the production of 3,4-dihydroxyphenylacetic acid (DHPA). In Geobacillus sp. (strain PA-9), this protein is 4-hydroxyphenylacetate 3-monooxygenase oxygenase component (hpaH).